Reading from the N-terminus, the 553-residue chain is Formate--tetrahydrofolate ligase (553 aa).

62–69 provides a ligand contact to ATP; that stretch reads TPAGEGKS.

Belongs to the formate--tetrahydrofolate ligase family.

It carries out the reaction (6S)-5,6,7,8-tetrahydrofolate + formate + ATP = (6R)-10-formyltetrahydrofolate + ADP + phosphate. It functions in the pathway one-carbon metabolism; tetrahydrofolate interconversion. The sequence is that of Formate--tetrahydrofolate ligase from Pediococcus pentosaceus (strain ATCC 25745 / CCUG 21536 / LMG 10740 / 183-1w).